A 142-amino-acid chain; its full sequence is Hemoglobin subunit alpha (142 aa).

The 141-residue stretch at 2 to 142 (VLSANDKSNV…VGNVLTSKYR (141 aa)) folds into the Globin domain. O2 is bound at residue His-59. Residue His-88 coordinates heme b.

Belongs to the globin family. As to quaternary structure, heterotetramer of two alpha chains and two beta chains. Red blood cells.

Functionally, involved in oxygen transport from the lung to the various peripheral tissues. The protein is Hemoglobin subunit alpha (HBA) of Aptenodytes forsteri (Emperor penguin).